A 326-amino-acid chain; its full sequence is Membrane-associated kinase regulator 5 (326 aa).

Disordered regions lie at residues 188 to 239 (TKKQ…GMSP) and 267 to 326 (GSRE…KISD). Low complexity-rich tracts occupy residues 190–202 (KQSS…PTSS) and 270–305 (ESSL…SSDS).

Expressed in roots.

Its subcellular location is the cell membrane. It is found in the cytoplasm. It localises to the cytosol. Its function is as follows. Positive effector of CLE45 peptide signaling. Post-transcriptionally regulated amplifier of the CLE45 peptide signal that acts downstream of BAM3 in the regulation of the transition of root protophloem cells from proliferation to differentiation; thus preventing primary root elongation but stimulating lateral roots development. The chain is Membrane-associated kinase regulator 5 from Arabidopsis thaliana (Mouse-ear cress).